Consider the following 352-residue polypeptide: MATMSSISKIIFLATCLIIHMGLSSADFYTVGYSQDDLTSIERLIQLFDSWMLKHNKIYESIDEKIYRFEIFRDNLMYIDETNKKNNSYWLGLNGFADLSNDEFKKKYVGFVAEDFTGLEHFDNEDFTYKHVTNYPQSIDWRAKGAVTPVKNQGACGSCWAFSTIATVEGINKIVTGNLLELSEQELVDCDKHSYGCKGGYQTTSLQYVANNGVHTSKVYPYQAKQYKCRATDKPGPKVKITGYKRVPSNCETSFLGALANQPLSVLVEAGGKPFQLYKSGVFDGPCGTKLDHAVTAVGYGTSDGKNYIIIKNSWGPNWGEKGYMRLKRQSGNSQGTCGVYKSSYYPFKGFA.

Residues 1-18 form the signal peptide; sequence MATMSSISKIIFLATCLI. A propeptide spans 19–134 (activation peptide); the sequence is IHMGLSSADF…EDFTYKHVTN (116 aa). A glycan (N-linked (GlcNAc...) asparagine) is linked at Asn-86. Intrachain disulfides connect Cys-156–Cys-197, Cys-190–Cys-229, and Cys-287–Cys-338. Cys-159 is a catalytic residue. Active-site residues include His-293 and Asn-313.

This sequence belongs to the peptidase C1 family.

It catalyses the reaction Specificity similar to that of papain.. Cysteine proteinase with a high level of diversity in substrate specificity. In Carica papaya (Papaya), this protein is Chymopapain.